Here is a 336-residue protein sequence, read N- to C-terminus: Heme A synthase (336 aa).

The next 8 helical transmembrane spans lie at 5–25, 92–112, 117–137, 153–173, 191–211, 253–273, 284–304, and 307–327; these read LTRWLLTCCIMVVAMIIVGGI, GRATGLIYILPLIYFYFKGII, ILSYIIVLLLFCVQGFMGWYM, LAFHLIIAVIIYHLLFYKLVK, LIFSVAAIAMIYVQIFLGALV, FIHRLGAYSLSIIVIALIISL, VAFYLSIALLIQLSTGVITLL, and VPIIAASMHQFFAIVLLSVVI. Histidine 255 contributes to the heme binding site. Residue histidine 315 coordinates heme.

The protein belongs to the COX15/CtaA family. Type 2 subfamily. Interacts with CtaB. Requires heme b as cofactor.

It is found in the cell membrane. It catalyses the reaction Fe(II)-heme o + 2 A + H2O = Fe(II)-heme a + 2 AH2. Its pathway is porphyrin-containing compound metabolism; heme A biosynthesis; heme A from heme O: step 1/1. Its function is as follows. Catalyzes the conversion of heme O to heme A by two successive hydroxylations of the methyl group at C8. The first hydroxylation forms heme I, the second hydroxylation results in an unstable dihydroxymethyl group, which spontaneously dehydrates, resulting in the formyl group of heme A. This is Heme A synthase from Rickettsia bellii (strain RML369-C).